The chain runs to 518 residues: GMP synthase [glutamine-hydrolyzing] (518 aa).

The Glutamine amidotransferase type-1 domain maps to 8–201 (TVLIIDFGSQ…VHKISGLKGN (194 aa)). Residue C85 is the Nucleophile of the active site. Active-site residues include H175 and E177. The 192-residue stretch at 202 to 393 (WSMASYRDQA…LGLPEQFLGR (192 aa)) folds into the GMPS ATP-PPase domain. Residue 229–235 (SGGVDSS) coordinates ATP.

In terms of assembly, homodimer.

The enzyme catalyses XMP + L-glutamine + ATP + H2O = GMP + L-glutamate + AMP + diphosphate + 2 H(+). It participates in purine metabolism; GMP biosynthesis; GMP from XMP (L-Gln route): step 1/1. Functionally, catalyzes the synthesis of GMP from XMP. In Bartonella quintana (strain Toulouse) (Rochalimaea quintana), this protein is GMP synthase [glutamine-hydrolyzing].